The sequence spans 166 residues: Large ribosomal subunit protein eL21 (166 aa).

This sequence belongs to the eukaryotic ribosomal protein eL21 family. Component of the large ribosomal subunit.

The protein resides in the cytoplasm. It is found in the cytosol. Its subcellular location is the endoplasmic reticulum. Functionally, component of the large ribosomal subunit. The ribosome is a large ribonucleoprotein complex responsible for the synthesis of proteins in the cell. The sequence is that of Large ribosomal subunit protein eL21 (RPL21) from Entamoeba histolytica (strain ATCC 30459 / HM-1:IMSS / ABRM).